We begin with the raw amino-acid sequence, 82 residues long: Lectin-D2 (82 aa).

2 consecutive Chitin-binding type-1 domains span residues 1 to 42 (APEC…QCDY) and 43 to 82 (WRCG…SQCD). 4 disulfide bridges follow: Cys-4/Cys-19, Cys-13/Cys-25, Cys-18/Cys-32, and Cys-36/Cys-40. 4 residues coordinate a carbohydrate: Ser-20, Trp-22, Tyr-24, and Tyr-31. Trp-43 is a binding site for a carbohydrate. 4 disulfide bridges follow: Cys-45–Cys-60, Cys-54–Cys-66, Cys-59–Cys-73, and Cys-77–Cys-81. Positions 61, 63, 65, and 72 each coordinate a carbohydrate.

In terms of assembly, monomer.

Its function is as follows. N-acetyl-D-glucosamine binding lectin. Shows no hemagglutinating activity towards rabbit erythrocytes and weak activity towards trypsin-treated erythrocytes. Has mitogenic activity towards human peripheral blood lymphocytes (HPBL). The protein is Lectin-D2 of Phytolacca americana (American pokeweed).